Consider the following 567-residue polypeptide: Glutamine--tRNA ligase (567 aa).

The short motif at 47–57 (PEPNGYLHIGH) is the 'HIGH' region element. ATP-binding positions include 48 to 50 (EPN) and 54 to 60 (HIGHAKS). 2 residues coordinate L-glutamine: Asp80 and Tyr225. Residues Thr244 and 274-275 (RL) each bind ATP. The 'KMSKS' region motif lies at 281–285 (ITSKR).

This sequence belongs to the class-I aminoacyl-tRNA synthetase family. In terms of assembly, monomer.

It is found in the cytoplasm. The enzyme catalyses tRNA(Gln) + L-glutamine + ATP = L-glutaminyl-tRNA(Gln) + AMP + diphosphate. In Pseudomonas putida (strain ATCC 47054 / DSM 6125 / CFBP 8728 / NCIMB 11950 / KT2440), this protein is Glutamine--tRNA ligase.